The chain runs to 302 residues: Ventral anterior homeobox 2a (302 aa).

5 disordered regions span residues 1-35 (MFDQ…RDKG), 50-73 (KDIP…SQST), 156-175 (RRTK…SSST), 199-223 (PPNL…LGTS), and 282-302 (AFEP…KSTS). Positions 105-164 (PKRTRTSFTAEQLYRLELEFQRCQYVVGRERTELARQLNLSETQVKVWFQNRRTKQKKDQ) form a DNA-binding region, homeobox. Positions 161-172 (KKDQSRDSEKRS) are enriched in basic and acidic residues. A compositionally biased stretch (low complexity) spans 204–223 (SSSQNNMGTSSGNGTNLGTS). Residues 287–296 (TRLDRKDTAS) show a composition bias toward basic and acidic residues.

The protein belongs to the EMX homeobox family.

The protein localises to the nucleus. Its function is as follows. Transcription factor that may function in dorsoventral specification of the forebrain. Regulates the expression of Wnt signaling antagonists including the expression of a truncated tcf7l2 isoform that cannot bind ctnnb1 and acts therefore as a potent dominant-negative Wnt antagonist. Plays a crucial role in eye development and, in particular, in the specification of the ventral optic vesicle. May be a regulator of axial polarization in the retina. This is Ventral anterior homeobox 2a (vax2-a) from Xenopus laevis (African clawed frog).